The following is a 538-amino-acid chain: Histone-arginine methyltransferase CARMER (538 aa).

The region spanning 148–457 (ASQYFQFYGY…QSYDVTIDLH (310 aa)) is the SAM-dependent MTase PRMT-type domain. The S-adenosyl-L-methionine site is built by Gln161, Arg170, Gly194, Glu216, Glu245, and Thr273. Arg508 is subject to Asymmetric dimethylarginine; by autocatalysis.

It belongs to the class I-like SAM-binding methyltransferase superfamily. Protein arginine N-methyltransferase family. As to quaternary structure, homodimer. In terms of processing, the dimethylated protein is the major form.

The protein localises to the cytoplasm. The protein resides in the nucleus. It carries out the reaction L-arginyl-[protein] + 2 S-adenosyl-L-methionine = N(omega),N(omega)-dimethyl-L-arginyl-[protein] + 2 S-adenosyl-L-homocysteine + 2 H(+). Functionally, methylates (mono- and asymmetric dimethylation) the guanidino nitrogens of arginyl residues in proteins. May methylate histone H3 at 'Arg-17' and activate transcription via chromatin remodeling. The chain is Histone-arginine methyltransferase CARMER (Art4) from Drosophila virilis (Fruit fly).